We begin with the raw amino-acid sequence, 768 residues long: Levansucrase (768 aa).

Positions Met-1–Ala-36 are cleaved as a signal peptide. Polar residues-rich tracts occupy residues Ser-57 to Leu-68, Thr-80 to Asn-99, Ser-106 to Asp-134, and Asn-143 to Ser-153. The tract at residues Ser-57 to Leu-158 is disordered. Residues Trp-250, Asp-251, and Ser-320 each coordinate sucrose. The active-site Nucleophile is the Asp-251. Ca(2+) is bound at residue Asp-398. Residues Arg-403 and Asp-404 each coordinate sucrose. Ca(2+) is bound by residues Gln-429, Asn-468, and Asp-502. Residue Glu-503 coordinates sucrose. Catalysis depends on Glu-505, which acts as the Proton donor/acceptor. Arg-523 lines the sucrose pocket. Residues His-688–Gly-736 form a disordered region. Over residues Val-691–Thr-727 the composition is skewed to low complexity. The short motif at Leu-732–Gly-736 is the LPXTG sorting signal element. At Ala-735 the chain carries Pentaglycyl murein peptidoglycan amidated alanine. Residues Gly-736–Asn-768 constitute a propeptide, removed by sortase.

Belongs to the glycosyl hydrolase 68 family.

Its subcellular location is the secreted. It localises to the cell wall. It is found in the cell surface. The catalysed reaction is [6)-beta-D-fructofuranosyl-(2-&gt;](n) alpha-D-glucopyranoside + sucrose = [6)-beta-D-fructofuranosyl-(2-&gt;](n+1) alpha-D-glucopyranoside + D-glucose. Its activity is regulated as follows. Calcium ions are required for optimal activity, but do not seem to be essential since addition of EDTA causes only a 48% drop in activity. Ca(2+) may play an important structural role and promote stability of levansucrase. In terms of biological role, fructosyltransferase that catalyzes the polymerization of the fructose moiety of sucrose to produce levan polymer and the fructo-oligosaccharide (FOS) 1-kestose. Is also able to convert raffinose into a fructan polymer and a single oligosaccharide (most likely Gal-Glc-Frc-Frc) in vitro; however, L.gasseri strain DSM 20077 is unable to ferment raffinose. Also displays sucrose hydrolase activity. The polypeptide is Levansucrase (Lactobacillus gasseri).